A 363-amino-acid chain; its full sequence is Strychnine O-methyltransferase (363 aa).

Gly-204, Asp-227, Asp-249, Met-250, and Lys-263 together coordinate S-adenosyl-L-methionine. Residue His-267 is the Proton acceptor of the active site.

The protein belongs to the class I-like SAM-binding methyltransferase superfamily. Cation-independent O-methyltransferase family.

It catalyses the reaction 10-hydroxystrychnine + S-adenosyl-L-methionine = beta-colubrine + S-adenosyl-L-homocysteine + H(+). The catalysed reaction is 11-demethylbrucine + S-adenosyl-L-methionine = brucine + S-adenosyl-L-homocysteine + H(+). Its pathway is alkaloid biosynthesis. In terms of biological role, O-methyltransferase involved in the biosynthesis of curare monoterpene indole alkaloids (MIAs), natural products such as strychnine, a neurotoxic compound used as a pesticide to control rodents, and its pharmacologically active derivatives, including brucine, used to regulate blood pressure. Curare alkaloids act as animal glycine receptor antagonists. Catalyzes the conversion of 10-OH strychnine to beta-colubrine, and of 11-deMe brucine to brucine. This is Strychnine O-methyltransferase from Strychnos nux-vomica (Poison nut).